A 93-amino-acid polypeptide reads, in one-letter code: Small ribosomal subunit protein uS19 (93 aa).

Belongs to the universal ribosomal protein uS19 family.

Protein S19 forms a complex with S13 that binds strongly to the 16S ribosomal RNA. The sequence is that of Small ribosomal subunit protein uS19 from Alkaliphilus oremlandii (strain OhILAs) (Clostridium oremlandii (strain OhILAs)).